Consider the following 224-residue polypeptide: Biotin transport ATP-binding protein BioM (224 aa).

The 222-residue stretch at 3 to 224 (IQFESAGVSF…AIARYREIAA (222 aa)) folds into the ABC transporter domain. 34-41 (GLNGSGKT) provides a ligand contact to ATP.

The protein belongs to the ABC transporter superfamily. Part of a biotin transporter complex composed of BioM, BioN and BioY.

Its subcellular location is the cell inner membrane. Involved in biotin uptake. This is Biotin transport ATP-binding protein BioM (bioM) from Rhizobium etli (strain ATCC 51251 / DSM 11541 / JCM 21823 / NBRC 15573 / CFN 42).